A 157-amino-acid polypeptide reads, in one-letter code: Transmembrane protein 42 (157 aa).

The next 4 membrane-spanning stretches (helical) occupy residues 37-57 (FWGV…AAAA), 67-87 (IGLC…MWTF), 100-120 (IASV…GYLL), and 124-144 (CQEI…TLIH).

The protein resides in the membrane. This chain is Transmembrane protein 42 (Tmem42), found in Mus musculus (Mouse).